Consider the following 204-residue polypeptide: FMN-dependent NADH:quinone oxidoreductase 5 (204 aa).

Ser10 provides a ligand contact to FMN.

It belongs to the azoreductase type 1 family. In terms of assembly, homodimer. FMN is required as a cofactor.

It carries out the reaction 2 a quinone + NADH + H(+) = 2 a 1,4-benzosemiquinone + NAD(+). The catalysed reaction is N,N-dimethyl-1,4-phenylenediamine + anthranilate + 2 NAD(+) = 2-(4-dimethylaminophenyl)diazenylbenzoate + 2 NADH + 2 H(+). In terms of biological role, quinone reductase that provides resistance to thiol-specific stress caused by electrophilic quinones. Also exhibits azoreductase activity. Catalyzes the reductive cleavage of the azo bond in aromatic azo compounds to the corresponding amines. This chain is FMN-dependent NADH:quinone oxidoreductase 5, found in Burkholderia lata (strain ATCC 17760 / DSM 23089 / LMG 22485 / NCIMB 9086 / R18194 / 383).